The primary structure comprises 242 residues: ATP-dependent dethiobiotin synthetase BioD (242 aa).

Residue Glu-12–Val-17 participates in ATP binding. Position 16 (Thr-16) interacts with Mg(2+). The active site involves Lys-37. Ser-41 is a substrate binding site. Residues Asp-51 and Glu-112–Gly-115 each bind ATP. Mg(2+) contacts are provided by Asp-51 and Glu-112.

Belongs to the dethiobiotin synthetase family. As to quaternary structure, homodimer. Requires Mg(2+) as cofactor.

The protein resides in the cytoplasm. The enzyme catalyses (7R,8S)-7,8-diammoniononanoate + CO2 + ATP = (4R,5S)-dethiobiotin + ADP + phosphate + 3 H(+). Its pathway is cofactor biosynthesis; biotin biosynthesis; biotin from 7,8-diaminononanoate: step 1/2. Its function is as follows. Catalyzes a mechanistically unusual reaction, the ATP-dependent insertion of CO2 between the N7 and N8 nitrogen atoms of 7,8-diaminopelargonic acid (DAPA, also called 7,8-diammoniononanoate) to form a ureido ring. This is ATP-dependent dethiobiotin synthetase BioD from Bacillus thuringiensis (strain Al Hakam).